The primary structure comprises 225 residues: Class E basic helix-loop-helix protein 23 (225 aa).

Residues 35 to 104 (EAARGYGTPG…PREQRSLRLS (70 aa)) are disordered. One can recognise a bHLH domain in the interval 100–154 (SLRLSINARERRRMHDLNDALDGLRAVIPYAHSPSVRKLSKIATLLLAKNYILMQ).

The protein resides in the nucleus. Its function is as follows. May function as transcriptional repressor. May modulate the expression of genes required for the differentiation and/or maintenance of pancreatic and neuronal cell types. May be important for rod bipolar cell maturation. The chain is Class E basic helix-loop-helix protein 23 (BHLHE23) from Homo sapiens (Human).